A 701-amino-acid polypeptide reads, in one-letter code: Potassium-transporting ATPase ATP-binding subunit 1 (701 aa).

Residues 1–26 (MNPVAPTRKVKPPRNRPSDRRQARKK) are disordered. Transmembrane regions (helical) follow at residues 57-77 (MFVV…PDLF), 90-110 (GLLT…EAVA), 241-261 (VALT…IATL), and 278-298 (IALL…AIGI). Residue aspartate 329 is the 4-aspartylphosphate intermediate of the active site. ATP-binding positions include aspartate 366, glutamate 370, 397–404 (FSAKTRMS), and lysine 416. 2 residues coordinate Mg(2+): aspartate 539 and aspartate 543. Transmembrane regions (helical) follow at residues 599 to 619 (FSIA…FAAA), 635 to 655 (AVLS…PLAL), and 681 to 701 (VIAP…VGLA).

This sequence belongs to the cation transport ATPase (P-type) (TC 3.A.3) family. Type IA subfamily. The system is composed of three essential subunits: KdpA, KdpB and KdpC.

It localises to the cell inner membrane. It carries out the reaction K(+)(out) + ATP + H2O = K(+)(in) + ADP + phosphate + H(+). Functionally, part of the high-affinity ATP-driven potassium transport (or Kdp) system, which catalyzes the hydrolysis of ATP coupled with the electrogenic transport of potassium into the cytoplasm. This subunit is responsible for energy coupling to the transport system and for the release of the potassium ions to the cytoplasm. The polypeptide is Potassium-transporting ATPase ATP-binding subunit 1 (Nostoc sp. (strain PCC 7120 / SAG 25.82 / UTEX 2576)).